The sequence spans 579 residues: Arginine--tRNA ligase (579 aa).

Residues 127-137 (PNLAKEMHVGH) carry the 'HIGH' region motif.

The protein belongs to the class-I aminoacyl-tRNA synthetase family. In terms of assembly, monomer.

It is found in the cytoplasm. The enzyme catalyses tRNA(Arg) + L-arginine + ATP = L-arginyl-tRNA(Arg) + AMP + diphosphate. In Stutzerimonas stutzeri (strain A1501) (Pseudomonas stutzeri), this protein is Arginine--tRNA ligase.